Reading from the N-terminus, the 349-residue chain is Core protein VP7 (349 aa).

N-linked (GlcNAc...) asparagine; by host glycosylation occurs at Asn287.

Belongs to the orbivirus VP7 family. In terms of assembly, homotrimer that assemble in a complex of 260 capsomers on an inner scaffold composed of VP3.

Its subcellular location is the virion. Functionally, the VP7 protein is one of the five proteins (with VP1, VP3, VP4, and VP6) which form the inner capsid of the virus. The sequence is that of Core protein VP7 (Segment-7) from Antilocapra americana (Pronghorn).